The following is a 594-amino-acid chain: MSKKRKWDDDYVRYWFTCVTEIDGTQRPQCVLCNSVFSNADLRPSKLSDHFNRQHGGIGGHDLSSLKHVPVPADQSETLKTFGVASQEDALLQASYQFAYLCAKEKNPHTIAEKLVKPCALEIAQIVLGPDAQKKLQQVPLSDDVIHSRIDEMSQDILQQVLEDIKASPLKVGIQLAETTDMDDCSQLMAFVRYIREREIVEEFLFCEPLQLTMKGKDVFNLFRDFFLKHKIALDVCGSVCTDGASSMLGENSEFVCCVKKEVPHIVITHCLVNPHTLVTKTLPTKLRDALFTVVRVINFIKGRAPNHRLFQAFFEEIGIEYSVLLFHTEMRWLSRGQILTHIFEMHEEINQFLHHQSSNLVDGFENKEFKIHLAYLADLFKHLNELSASMQRTGMNTVSAREKLSAFVRKFPFWLKRIEKRNFTNFPFLEEIVVSDNEALCIAAEITLHLQQLSSFFNGYFSVGDLDEASKWILDPFLFNLDFVDDGYLVKNDLAELRASGQILMEFETMKLEDFWCAQFTVFPSLAKTALEILIPFATTYLCELGFSSLLHFKTKSRSCLNMSDDIRVAISKKVPRFSDIIEQKLQLQQKSL.

This Bos taurus (Bovine) protein is Protein FAM200C (FAM200C).